Reading from the N-terminus, the 321-residue chain is S-methyl-5'-thioadenosine phosphorylase (321 aa).

Phosphate-binding positions include threonine 30, 73–74, and 106–107; these read RH and SA. Methionine 215 serves as a coordination point for substrate. Serine 216 serves as a coordination point for phosphate. 239-241 contacts substrate; sequence DYD.

Belongs to the PNP/MTAP phosphorylase family. MTAP subfamily. As to quaternary structure, homotrimer.

It is found in the cytoplasm. The protein localises to the nucleus. The catalysed reaction is S-methyl-5'-thioadenosine + phosphate = 5-(methylsulfanyl)-alpha-D-ribose 1-phosphate + adenine. Its pathway is amino-acid biosynthesis; L-methionine biosynthesis via salvage pathway; S-methyl-5-thio-alpha-D-ribose 1-phosphate from S-methyl-5'-thioadenosine (phosphorylase route): step 1/1. Its function is as follows. Catalyzes the reversible phosphorylation of S-methyl-5'-thioadenosine (MTA) to adenine and 5-methylthioribose-1-phosphate. Involved in the breakdown of MTA, a major by-product of polyamine biosynthesis. Responsible for the first step in the methionine salvage pathway after MTA has been generated from S-adenosylmethionine. Has broad substrate specificity with 6-aminopurine nucleosides as preferred substrates. The chain is S-methyl-5'-thioadenosine phosphorylase from Yarrowia lipolytica (strain CLIB 122 / E 150) (Yeast).